Here is a 586-residue protein sequence, read N- to C-terminus: Serine/threonine-protein phosphatase 2A 56 kDa regulatory subunit delta isoform (586 aa).

The interval 1-80 (MSPSPSSSGK…QSSSRFNLSK (80 aa)) is disordered. 6 consecutive repeat copies span residues 21–22 (QP), 23–24 (QP), 25–26 (QP), 27–28 (QP), 29–30 (QP), and 31–32 (QP). Residues 21-36 (QPQPQPQPQPQPQSQP) are 8 X 2 AA approximate tandem repeats of Q-P. The span at 23-35 (QPQPQPQPQPQSQ) shows a compositional bias: pro residues. A 7; approximate repeat occupies 33-34 (QS). Copy 8 of the repeat occupies 35–36 (QP). The segment covering 36 to 45 (PPSSNKRPSN) has biased composition (low complexity). Residue T47 is modified to Phosphothreonine. 3 positions are modified to phosphoserine: S72, S73, and S74. An SH3-binding; class I motif is present at residues 507–514 (RAPPPLPP). Positions 532 to 549 (KRTVETEAVQMLKDIKKE) match the Nuclear localization signal motif. Residues S557 and S582 each carry the phosphoserine modification.

This sequence belongs to the phosphatase 2A regulatory subunit B56 family. PP2A consists of a common heterodimeric core enzyme, composed of a 36 kDa catalytic subunit (subunit C) and a 65 kDa constant regulatory subunit (PR65 or subunit A), that associates with a variety of regulatory subunits. Proteins that associate with the core dimer include three families of regulatory subunits B (the R2/B/PR55/B55, R3/B''/PR72/PR130/PR59 and R5/B'/B56 families), the 48 kDa variable regulatory subunit, viral proteins, and cell signaling molecules. Interacts with the PP2A A subunit PPP2R1A. Interacts with SGO1. Interacts with ADCY8. In terms of tissue distribution, highly expressed in brain.

Its subcellular location is the nucleus. Functionally, the B regulatory subunit might modulate substrate selectivity and catalytic activity, and might also direct the localization of the catalytic enzyme to a particular subcellular compartment. The sequence is that of Serine/threonine-protein phosphatase 2A 56 kDa regulatory subunit delta isoform (PPP2R5D) from Oryctolagus cuniculus (Rabbit).